The chain runs to 362 residues: Guanine nucleotide-binding protein alpha-10 subunit (362 aa).

Gly2 is lipidated: N-myristoyl glycine. The S-palmitoyl cysteine moiety is linked to residue Cys4. The 328-residue stretch at 35–362 (LEQSVLLIGP…QENLKDTGMI (328 aa)) folds into the G-alpha domain. A G1 motif region spans residues 38-51 (SVLLIGPGESGKST). GTP-binding positions include 43–50 (GPGESGKS), 184–190 (VRIRVPT), 209–213 (DCGGQ), 278–281 (NKID), and Ala335. Positions 50 and 190 each coordinate Mg(2+). A G2 motif region spans residues 182–190 (DIVRIRVPT). Residues 205–214 (LSVIDCGGQR) are G3 motif. The G4 motif stretch occupies residues 274 to 281 (ILFLNKID). Positions 333–337 (TCAIS) are G5 motif.

This sequence belongs to the G-alpha family. G proteins are composed of 3 units; alpha, beta and gamma. The alpha chain contains the guanine nucleotide binding site.

In terms of biological role, guanine nucleotide-binding proteins (G proteins) are involved as modulators or transducers in various transmembrane signaling systems. The protein is Guanine nucleotide-binding protein alpha-10 subunit (gpa-10) of Caenorhabditis briggsae.